The chain runs to 431 residues: Phosphomethylpyrimidine synthase (431 aa).

Substrate-binding positions include Asn-66, Met-95, Tyr-124, His-163, 185–187, 226–229, and Glu-265; these read SRG and DGLR. His-269 is a Zn(2+) binding site. Residue Tyr-292 participates in substrate binding. Zn(2+) is bound at residue His-333. [4Fe-4S] cluster is bound by residues Cys-408, Cys-411, and Cys-415.

It belongs to the ThiC family. It depends on [4Fe-4S] cluster as a cofactor.

It catalyses the reaction 5-amino-1-(5-phospho-beta-D-ribosyl)imidazole + S-adenosyl-L-methionine = 4-amino-2-methyl-5-(phosphooxymethyl)pyrimidine + CO + 5'-deoxyadenosine + formate + L-methionine + 3 H(+). The protein operates within cofactor biosynthesis; thiamine diphosphate biosynthesis. Its function is as follows. Catalyzes the synthesis of the hydroxymethylpyrimidine phosphate (HMP-P) moiety of thiamine from aminoimidazole ribotide (AIR) in a radical S-adenosyl-L-methionine (SAM)-dependent reaction. The chain is Phosphomethylpyrimidine synthase from Dehalococcoides mccartyi (strain ATCC BAA-2100 / JCM 16839 / KCTC 5957 / BAV1).